We begin with the raw amino-acid sequence, 198 residues long: MFITYLLLIVAYLLGSIPFALVVGKIGYGIDIREHGSGNLGGTNTFRTLGKKAGFIVTIADILKGTLATGLPLIFSLDIHPLLFGLAAVLGHVYPIFARFRGGKAVATSAGVLLCYAPIIFAILAVVFFTLLFTTRYVSLSSMVTAIAAVIASIVNGDKIFIVAMCLLAGMVIYRHRANIGRIINKTEPKANFTKKQK.

5 consecutive transmembrane segments (helical) span residues 2 to 22 (FITY…FALV), 53 to 75 (AGFI…PLIF), 79 to 98 (IHPL…PIFA), 113 to 133 (LLCY…TLLF), and 147 to 167 (IAAV…AMCL).

The protein belongs to the PlsY family. As to quaternary structure, probably interacts with PlsX.

It localises to the cell membrane. It carries out the reaction an acyl phosphate + sn-glycerol 3-phosphate = a 1-acyl-sn-glycero-3-phosphate + phosphate. It participates in lipid metabolism; phospholipid metabolism. Functionally, catalyzes the transfer of an acyl group from acyl-phosphate (acyl-PO(4)) to glycerol-3-phosphate (G3P) to form lysophosphatidic acid (LPA). This enzyme utilizes acyl-phosphate as fatty acyl donor, but not acyl-CoA or acyl-ACP. In Bacillus cytotoxicus (strain DSM 22905 / CIP 110041 / 391-98 / NVH 391-98), this protein is Glycerol-3-phosphate acyltransferase.